The sequence spans 398 residues: Argininosuccinate synthase (398 aa).

Residues 9-17 (AYSGGVDTS) and Ala-37 contribute to the ATP site. Tyr-88 is an L-citrulline binding site. Gly-118 contributes to the ATP binding site. The L-aspartate site is built by Thr-120, Asn-124, and Asp-125. Residue Asn-124 participates in L-citrulline binding. 5 residues coordinate L-citrulline: Arg-128, Ser-176, Ser-185, Glu-261, and Tyr-273.

Belongs to the argininosuccinate synthase family. Type 1 subfamily. In terms of assembly, homotetramer.

The protein localises to the cytoplasm. It carries out the reaction L-citrulline + L-aspartate + ATP = 2-(N(omega)-L-arginino)succinate + AMP + diphosphate + H(+). It functions in the pathway amino-acid biosynthesis; L-arginine biosynthesis; L-arginine from L-ornithine and carbamoyl phosphate: step 2/3. This is Argininosuccinate synthase from Gloeobacter violaceus (strain ATCC 29082 / PCC 7421).